The chain runs to 208 residues: MARLNVKPTRMELSNLKNRLKTATRGHKLLKDKRDELMRRFVDLIRENNELRQTIEKELAANMKEFVLAKASENSLMVEELFAVPVHEVTLWIDIENIMSVNVPKFHVQSNTAREQEQGEFAYSYLSSNSEMDNTIQKTKELLEKLLRLAEVEKTCQLMADDIEKTRRRVNGLEYSIIPQLKETIHYIELKLEEAERASLVRIMKITS.

The protein belongs to the V-ATPase D subunit family.

In terms of biological role, produces ATP from ADP in the presence of a proton gradient across the membrane. The sequence is that of V-type ATP synthase subunit D from Streptococcus pyogenes serotype M1.